We begin with the raw amino-acid sequence, 450 residues long: Phosphoglucosamine mutase (450 aa).

The Phosphoserine intermediate role is filled by Ser102. Mg(2+) contacts are provided by Ser102, Asp243, Asp245, and Asp247. Phosphoserine is present on Ser102.

Belongs to the phosphohexose mutase family. Requires Mg(2+) as cofactor. In terms of processing, activated by phosphorylation.

The catalysed reaction is alpha-D-glucosamine 1-phosphate = D-glucosamine 6-phosphate. Its function is as follows. Catalyzes the conversion of glucosamine-6-phosphate to glucosamine-1-phosphate. This is Phosphoglucosamine mutase from Agrobacterium fabrum (strain C58 / ATCC 33970) (Agrobacterium tumefaciens (strain C58)).